The chain runs to 146 residues: Hemoglobin subunit beta (146 aa).

Residues 2–146 (QWTAEEKQLI…VAHALARKYH (145 aa)) enclose the Globin domain. Residues His63 and His92 each coordinate heme b.

The protein belongs to the globin family. Heterotetramer of two alpha chains and two beta chains. Red blood cells.

Involved in oxygen transport from the lung to the various peripheral tissues. This is Hemoglobin subunit beta (HBB) from Passer montanus (Eurasian tree sparrow).